The primary structure comprises 338 residues: Rho GTPase-activating protein gacA (338 aa).

Residues 149 to 327 (NTLEHVEDEG…NVLSHKVAVH (179 aa)) enclose the Rho-GAP domain.

It localises to the cytoplasm. In terms of biological role, rho GTPase-activating protein involved in the signal transduction pathway. The sequence is that of Rho GTPase-activating protein gacA (gacA) from Dictyostelium discoideum (Social amoeba).